We begin with the raw amino-acid sequence, 204 residues long: Large ribosomal subunit protein eL15 (204 aa).

This sequence belongs to the eukaryotic ribosomal protein eL15 family. Component of the large ribosomal subunit.

The protein localises to the cytoplasm. Its function is as follows. Component of the large ribosomal subunit. The ribosome is a large ribonucleoprotein complex responsible for the synthesis of proteins in the cell. This Hypophthalmichthys nobilis (Bighead carp) protein is Large ribosomal subunit protein eL15 (rpl15).